Consider the following 397-residue polypeptide: F-box protein At3g49450 (397 aa).

The F-box domain occupies 26-75 (GENSGTLPTDLMVEILSRVPAKSAARFRCVSNDWNSLLRSPYLTNLFLKR).

The polypeptide is F-box protein At3g49450 (Arabidopsis thaliana (Mouse-ear cress)).